Reading from the N-terminus, the 196-residue chain is Thymidine kinase (196 aa).

Residue 17 to 24 (GPMFAGKT) participates in ATP binding. Glutamate 92 functions as the Proton acceptor in the catalytic mechanism. Phenylalanine 121 contacts substrate. 2 residues coordinate Zn(2+): cysteine 146 and cysteine 149. 166 to 170 (LILAG) is a substrate binding site. Zn(2+)-binding residues include cysteine 179 and cysteine 182.

The protein belongs to the thymidine kinase family.

The enzyme catalyses thymidine + ATP = dTMP + ADP + H(+). Its function is as follows. Phosphorylates thymidine. ASFV replicates in the cytoplasm of infected cells and contains genes encoding a number of enzymes needed for DNA synthesis, including thymidine kinase. Important for growth in swine macrophages in vitro and is a virus virulence factor in swine. The protein is Thymidine kinase of African swine fever virus (strain Badajoz 1971 Vero-adapted) (Ba71V).